A 328-amino-acid chain; its full sequence is DNA-directed RNA polymerase subunit alpha 2 (328 aa).

Residues 1–234 form an alpha N-terminal domain (alpha-NTD) region; sequence MQGSVIEFLK…EQLDAFVDLR (234 aa). Positions 248-328 are alpha C-terminal domain (alpha-CTD); that stretch reads FDPILLRPVD…NWPPASLSED (81 aa).

The protein belongs to the RNA polymerase alpha chain family. As to quaternary structure, homodimer. The RNAP catalytic core consists of 2 alpha, 1 beta, 1 beta' and 1 omega subunit. When a sigma factor is associated with the core the holoenzyme is formed, which can initiate transcription.

The enzyme catalyses RNA(n) + a ribonucleoside 5'-triphosphate = RNA(n+1) + diphosphate. In terms of biological role, DNA-dependent RNA polymerase catalyzes the transcription of DNA into RNA using the four ribonucleoside triphosphates as substrates. The chain is DNA-directed RNA polymerase subunit alpha 2 from Psychromonas ingrahamii (strain DSM 17664 / CCUG 51855 / 37).